A 746-amino-acid chain; its full sequence is NAD(P)H-quinone oxidoreductase subunit 5, chloroplastic (746 aa).

A run of 16 helical transmembrane segments spans residues 9-29, 40-60, 89-109, 125-145, 147-167, 185-205, 221-241, 258-278, 280-300, 327-347, 354-374, 396-416, 425-445, 547-567, 608-628, and 723-743; these read WIIPFIPLPVPILLGVGLLLF, WTFLSIFLLSIVMIFSLYLSI, IDPLTSIMSILITTVGILVLI, FAYMGFFNTSMLGLVTSSNLI, VYFFWELVGMCSYLLIGFWFT, GDFGLLLGILGLYWITGSFEF, VNLLFLTLCAFLLFVGPIAKS, TPISALIHAATMVAAGIFLVA, LLPLFIVIPSIMYIISLIGII, LGYMMLALGMGSYRSALFHLI, ALLFLGSGSIIHSMEAIVGYS, TAFLVGTLSLCGIPPLACFWS, LLFSPIFAIIACSTAGLTAFY, ILFPMLVLLLFTLFIGAIGIP, FSVSIAVFGIFIAYCLYKPFY, and YLFLYLSYVLIFLMILFFFYF.

This sequence belongs to the complex I subunit 5 family. In terms of assembly, NDH is composed of at least 16 different subunits, 5 of which are encoded in the nucleus.

It is found in the plastid. Its subcellular location is the chloroplast thylakoid membrane. The enzyme catalyses a plastoquinone + NADH + (n+1) H(+)(in) = a plastoquinol + NAD(+) + n H(+)(out). The catalysed reaction is a plastoquinone + NADPH + (n+1) H(+)(in) = a plastoquinol + NADP(+) + n H(+)(out). In terms of biological role, NDH shuttles electrons from NAD(P)H:plastoquinone, via FMN and iron-sulfur (Fe-S) centers, to quinones in the photosynthetic chain and possibly in a chloroplast respiratory chain. The immediate electron acceptor for the enzyme in this species is believed to be plastoquinone. Couples the redox reaction to proton translocation, and thus conserves the redox energy in a proton gradient. This Crucihimalaya wallichii (Rock-cress) protein is NAD(P)H-quinone oxidoreductase subunit 5, chloroplastic (ndhF).